The chain runs to 240 residues: Triosephosphate isomerase (240 aa).

A substrate-binding site is contributed by 6–8 (NLK). The Electrophile role is filled by His-88. Catalysis depends on Glu-157, which acts as the Proton acceptor. Residues Gly-163 and Ser-193 each contribute to the substrate site.

This sequence belongs to the triosephosphate isomerase family. Homodimer.

It is found in the cytoplasm. The catalysed reaction is D-glyceraldehyde 3-phosphate = dihydroxyacetone phosphate. The protein operates within carbohydrate biosynthesis; gluconeogenesis. It functions in the pathway carbohydrate degradation; glycolysis; D-glyceraldehyde 3-phosphate from glycerone phosphate: step 1/1. In terms of biological role, involved in the gluconeogenesis. Catalyzes stereospecifically the conversion of dihydroxyacetone phosphate (DHAP) to D-glyceraldehyde-3-phosphate (G3P). In Sulfurimonas denitrificans (strain ATCC 33889 / DSM 1251) (Thiomicrospira denitrificans (strain ATCC 33889 / DSM 1251)), this protein is Triosephosphate isomerase.